A 734-amino-acid polypeptide reads, in one-letter code: Photosystem I P700 chlorophyll a apoprotein A2 (734 aa).

Transmembrane regions (helical) follow at residues Ile-46–Ala-69, Leu-135–Gln-158, Leu-175–Ile-199, Met-273–Tyr-291, Ile-330–Tyr-353, Ala-369–Ile-395, Ala-417–His-439, and Phe-517–Val-535. Cys-559 and Cys-568 together coordinate [4Fe-4S] cluster. 2 helical membrane-spanning segments follow: residues Ala-575 to Trp-596 and Leu-643 to Ile-665. Chlorophyll a-binding residues include His-654, Met-662, and Tyr-670. Residue Trp-671 participates in phylloquinone binding. Residues Leu-707–Ala-727 traverse the membrane as a helical segment.

It belongs to the PsaA/PsaB family. In terms of assembly, the PsaA/B heterodimer binds the P700 chlorophyll special pair and subsequent electron acceptors. PSI consists of a core antenna complex that captures photons, and an electron transfer chain that converts photonic excitation into a charge separation. The eukaryotic PSI reaction center is composed of at least 11 subunits. P700 is a chlorophyll a/chlorophyll a' dimer, A0 is one or more chlorophyll a, A1 is one or both phylloquinones and FX is a shared 4Fe-4S iron-sulfur center. serves as cofactor.

The protein localises to the plastid. It localises to the chloroplast thylakoid membrane. It carries out the reaction reduced [plastocyanin] + hnu + oxidized [2Fe-2S]-[ferredoxin] = oxidized [plastocyanin] + reduced [2Fe-2S]-[ferredoxin]. PsaA and PsaB bind P700, the primary electron donor of photosystem I (PSI), as well as the electron acceptors A0, A1 and FX. PSI is a plastocyanin-ferredoxin oxidoreductase, converting photonic excitation into a charge separation, which transfers an electron from the donor P700 chlorophyll pair to the spectroscopically characterized acceptors A0, A1, FX, FA and FB in turn. Oxidized P700 is reduced on the lumenal side of the thylakoid membrane by plastocyanin. The sequence is that of Photosystem I P700 chlorophyll a apoprotein A2 from Triticum aestivum (Wheat).